A 156-amino-acid polypeptide reads, in one-letter code: Small ribosomal subunit protein uS7 (156 aa).

The protein belongs to the universal ribosomal protein uS7 family. As to quaternary structure, part of the 30S ribosomal subunit. Contacts proteins S9 and S11.

In terms of biological role, one of the primary rRNA binding proteins, it binds directly to 16S rRNA where it nucleates assembly of the head domain of the 30S subunit. Is located at the subunit interface close to the decoding center, probably blocks exit of the E-site tRNA. The polypeptide is Small ribosomal subunit protein uS7 (Desulforudis audaxviator (strain MP104C)).